Reading from the N-terminus, the 154-residue chain is Myoglobin (154 aa).

One can recognise a Globin domain in the interval 2 to 148 (GLSDDEWNHV…FRNDMASKYK (147 aa)). A nitrite-binding site is contributed by H65. An O2-binding site is contributed by H65. Residue H94 participates in heme b binding.

It belongs to the globin family. Monomeric.

It is found in the cytoplasm. It localises to the sarcoplasm. It carries out the reaction Fe(III)-heme b-[protein] + nitric oxide + H2O = Fe(II)-heme b-[protein] + nitrite + 2 H(+). The enzyme catalyses H2O2 + AH2 = A + 2 H2O. Functionally, monomeric heme protein which primary function is to store oxygen and facilitate its diffusion within muscle tissues. Reversibly binds oxygen through a pentacoordinated heme iron and enables its timely and efficient release as needed during periods of heightened demand. Depending on the oxidative conditions of tissues and cells, and in addition to its ability to bind oxygen, it also has a nitrite reductase activity whereby it regulates the production of bioactive nitric oxide. Under stress conditions, like hypoxia and anoxia, it also protects cells against reactive oxygen species thanks to its pseudoperoxidase activity. The protein is Myoglobin (MB) of Caretta caretta (Loggerhead sea turtle).